A 91-amino-acid chain; its full sequence is Lactococcin-B immunity protein (91 aa).

Imparts immunity to lactococcin-B to naturally sensitive host strains. This is Lactococcin-B immunity protein (lciB) from Lactococcus lactis subsp. cremoris (Streptococcus cremoris).